Consider the following 89-residue polypeptide: Small ribosomal subunit protein bS20 (89 aa).

2 stretches are compositionally biased toward basic residues: residues 1 to 10 (MANIKSKIKS) and 17 to 29 (ARKRNSMIKSRVK). The segment at 1-29 (MANIKSKIKSIKTMEKARKRNSMIKSRVK) is disordered.

Belongs to the bacterial ribosomal protein bS20 family.

In terms of biological role, binds directly to 16S ribosomal RNA. The protein is Small ribosomal subunit protein bS20 of Mycoplasmopsis pulmonis (strain UAB CTIP) (Mycoplasma pulmonis).